A 38-amino-acid polypeptide reads, in one-letter code: Defensin (38 aa).

Cystine bridges form between cysteine 4–cysteine 26, cysteine 11–cysteine 34, and cysteine 15–cysteine 36.

This sequence belongs to the invertebrate defensin family. Type 2 subfamily.

The protein localises to the secreted. Functionally, mediates the inducible antibacterial activity in larvae of A.cyanea. This is Defensin from Aeshna cyanea (Southern hawker dragonfly).